We begin with the raw amino-acid sequence, 66 residues long: Alpha-like toxin BeM9 (66 aa).

One can recognise an LCN-type CS-alpha/beta domain in the interval 2 to 66 (RDAYIAKPHN…VPIRIPGKCH (65 aa)). Disulfide bonds link C12/C65, C16/C38, C24/C48, and C28/C50.

This sequence belongs to the long (4 C-C) scorpion toxin superfamily. Sodium channel inhibitor family. Alpha subfamily. As to expression, expressed by the venom gland.

It is found in the secreted. In terms of biological role, alpha toxins bind voltage-independently at site-3 of sodium channels (Nav) and inhibit the inactivation of the activated channels, thereby blocking neuronal transmission. This toxin is active on both mammals and insects, since it inhibits inactivation of rNav1.4/SCN4A, hNav1.5/SCN5A, mNav1.6/SCN8A and insect BgNav1 and DmNav1 channels. In vivo, it shows paralytic activity in mice. The polypeptide is Alpha-like toxin BeM9 (Mesobuthus eupeus (Lesser Asian scorpion)).